Reading from the N-terminus, the 59-residue chain is Large ribosomal subunit protein uL30 (59 aa).

This sequence belongs to the universal ribosomal protein uL30 family. In terms of assembly, part of the 50S ribosomal subunit.

This Sulfurihydrogenibium sp. (strain YO3AOP1) protein is Large ribosomal subunit protein uL30.